We begin with the raw amino-acid sequence, 630 residues long: 1-deoxy-D-xylulose-5-phosphate synthase (630 aa).

Thiamine diphosphate contacts are provided by residues H72 and 113–115 (GHS). Residue D144 coordinates Mg(2+). Residues 145–146 (GA), N173, Y284, and E367 contribute to the thiamine diphosphate site. N173 lines the Mg(2+) pocket.

The protein belongs to the transketolase family. DXPS subfamily. In terms of assembly, homodimer. The cofactor is Mg(2+). It depends on thiamine diphosphate as a cofactor.

It catalyses the reaction D-glyceraldehyde 3-phosphate + pyruvate + H(+) = 1-deoxy-D-xylulose 5-phosphate + CO2. It participates in metabolic intermediate biosynthesis; 1-deoxy-D-xylulose 5-phosphate biosynthesis; 1-deoxy-D-xylulose 5-phosphate from D-glyceraldehyde 3-phosphate and pyruvate: step 1/1. Catalyzes the acyloin condensation reaction between C atoms 2 and 3 of pyruvate and glyceraldehyde 3-phosphate to yield 1-deoxy-D-xylulose-5-phosphate (DXP). The polypeptide is 1-deoxy-D-xylulose-5-phosphate synthase (Bacillus cytotoxicus (strain DSM 22905 / CIP 110041 / 391-98 / NVH 391-98)).